We begin with the raw amino-acid sequence, 282 residues long: Globin-related protein glb-13 (282 aa).

A disordered region spans residues 1–46 (MGQENSKCPHQSLAEKRYKVERPKTKKVSSGSATERCLSTQSDEKN). Positions 13–23 (LAEKRYKVERP) are enriched in basic and acidic residues. Residues 28-41 (VSSGSATERCLSTQ) are compositionally biased toward polar residues. A Globin domain is found at 100-249 (FLTRRERILL…IISFMRRGFD (150 aa)). Heme b contacts are provided by H162 and H194.

The protein belongs to the globin family.

Involved in oxidative stress resistance. The sequence is that of Globin-related protein glb-13 from Caenorhabditis elegans.